Reading from the N-terminus, the 268-residue chain is Undecaprenyl-diphosphatase (268 aa).

7 helical membrane-spanning segments follow: residues 47–67, 85–105, 109–129, 144–164, 184–204, 217–237, and 246–266; these read FAVLIQLGAILAILALYFSKL, IGVLVAFLPAAVIGAASGGLI, LFNPWVVCFTLILGGGILLWV, FPLPMYLIIGFAQCIAMFPGV, AAEFSFFLAIPTMLGAFVYDL, LIVAVGFAVSFITAIIVVKTF, and FALFAWWRVIVGTLGLIALAL.

Belongs to the UppP family.

It localises to the cell inner membrane. It catalyses the reaction di-trans,octa-cis-undecaprenyl diphosphate + H2O = di-trans,octa-cis-undecaprenyl phosphate + phosphate + H(+). Its function is as follows. Catalyzes the dephosphorylation of undecaprenyl diphosphate (UPP). Confers resistance to bacitracin. This Rhodopseudomonas palustris (strain BisA53) protein is Undecaprenyl-diphosphatase.